An 88-amino-acid chain; its full sequence is Small ribosomal subunit protein uS15 (88 aa).

The protein belongs to the universal ribosomal protein uS15 family. In terms of assembly, part of the 30S ribosomal subunit. Forms a bridge to the 50S subunit in the 70S ribosome, contacting the 23S rRNA.

Its function is as follows. One of the primary rRNA binding proteins, it binds directly to 16S rRNA where it helps nucleate assembly of the platform of the 30S subunit by binding and bridging several RNA helices of the 16S rRNA. Forms an intersubunit bridge (bridge B4) with the 23S rRNA of the 50S subunit in the ribosome. This Paracidovorax citrulli (strain AAC00-1) (Acidovorax citrulli) protein is Small ribosomal subunit protein uS15.